Consider the following 296-residue polypeptide: 33 kDa chaperonin (296 aa).

2 disulfide bridges follow: cysteine 233/cysteine 235 and cysteine 267/cysteine 270.

Belongs to the HSP33 family. Post-translationally, under oxidizing conditions two disulfide bonds are formed involving the reactive cysteines. Under reducing conditions zinc is bound to the reactive cysteines and the protein is inactive.

The protein localises to the cytoplasm. Its function is as follows. Redox regulated molecular chaperone. Protects both thermally unfolding and oxidatively damaged proteins from irreversible aggregation. Plays an important role in the bacterial defense system toward oxidative stress. In Actinobacillus pleuropneumoniae serotype 3 (strain JL03), this protein is 33 kDa chaperonin.